A 487-amino-acid polypeptide reads, in one-letter code: Bifunctional protein GlmU (487 aa).

The segment at 1–232 (MAVIVLAAGA…AAELAGVNDR (232 aa)) is pyrophosphorylase. UDP-N-acetyl-alpha-D-glucosamine is bound by residues 6–9 (LAAG), lysine 20, glutamine 77, and 82–83 (GT). Residue aspartate 107 participates in Mg(2+) binding. UDP-N-acetyl-alpha-D-glucosamine is bound by residues glycine 142, glutamate 157, asparagine 172, and asparagine 230. A Mg(2+)-binding site is contributed by asparagine 230. The segment at 233–253 (VQLAAAGAELNRRTVTAAMRG) is linker. The tract at residues 254-487 (GATIVDPATT…PTSTPQADQE (234 aa)) is N-acetyltransferase. UDP-N-acetyl-alpha-D-glucosamine is bound by residues arginine 335 and lysine 353. The active-site Proton acceptor is the histidine 365. Positions 368 and 379 each coordinate UDP-N-acetyl-alpha-D-glucosamine. Acetyl-CoA-binding positions include alanine 382, 388-389 (NY), serine 407, and alanine 425. The interval 453–487 (AKKRPGTPAAEAGEAAAKRVAEGGSPTSTPQADQE) is disordered. The segment covering 477–487 (SPTSTPQADQE) has biased composition (polar residues).

This sequence in the N-terminal section; belongs to the N-acetylglucosamine-1-phosphate uridyltransferase family. It in the C-terminal section; belongs to the transferase hexapeptide repeat family. Homotrimer. Mg(2+) is required as a cofactor.

The protein resides in the cytoplasm. It catalyses the reaction alpha-D-glucosamine 1-phosphate + acetyl-CoA = N-acetyl-alpha-D-glucosamine 1-phosphate + CoA + H(+). The catalysed reaction is N-acetyl-alpha-D-glucosamine 1-phosphate + UTP + H(+) = UDP-N-acetyl-alpha-D-glucosamine + diphosphate. The protein operates within nucleotide-sugar biosynthesis; UDP-N-acetyl-alpha-D-glucosamine biosynthesis; N-acetyl-alpha-D-glucosamine 1-phosphate from alpha-D-glucosamine 6-phosphate (route II): step 2/2. It participates in nucleotide-sugar biosynthesis; UDP-N-acetyl-alpha-D-glucosamine biosynthesis; UDP-N-acetyl-alpha-D-glucosamine from N-acetyl-alpha-D-glucosamine 1-phosphate: step 1/1. Its pathway is bacterial outer membrane biogenesis; LPS lipid A biosynthesis. Functionally, catalyzes the last two sequential reactions in the de novo biosynthetic pathway for UDP-N-acetylglucosamine (UDP-GlcNAc). The C-terminal domain catalyzes the transfer of acetyl group from acetyl coenzyme A to glucosamine-1-phosphate (GlcN-1-P) to produce N-acetylglucosamine-1-phosphate (GlcNAc-1-P), which is converted into UDP-GlcNAc by the transfer of uridine 5-monophosphate (from uridine 5-triphosphate), a reaction catalyzed by the N-terminal domain. In Corynebacterium jeikeium (strain K411), this protein is Bifunctional protein GlmU.